The following is a 218-amino-acid chain: Cytochrome b6 (218 aa).

A helical membrane pass occupies residues 35–55 (IFYCLGGITLVCFLIQFATGF). Cysteine 38 is a binding site for heme c. Positions 89 and 103 each coordinate heme b. 3 helical membrane-spanning segments follow: residues 93–113 (ASMM…TGGF), 119–139 (LTWV…VTGY), and 189–209 (LHTF…FLMI). Positions 190 and 205 each coordinate heme b.

This sequence belongs to the cytochrome b family. PetB subfamily. The 4 large subunits of the cytochrome b6-f complex are cytochrome b6, subunit IV (17 kDa polypeptide, PetD), cytochrome f and the Rieske protein, while the 4 small subunits are PetG, PetL, PetM and PetN. The complex functions as a dimer. The cofactor is heme b. Requires heme c as cofactor.

The protein localises to the cellular thylakoid membrane. Component of the cytochrome b6-f complex, which mediates electron transfer between photosystem II (PSII) and photosystem I (PSI), cyclic electron flow around PSI, and state transitions. The chain is Cytochrome b6 from Prochlorococcus marinus (strain SARG / CCMP1375 / SS120).